The primary structure comprises 317 residues: Probable cell division protein WhiA (317 aa).

Residues 275 to 308 constitute a DNA-binding region (H-T-H motif); the sequence is SLKELGEMLVPKVGKSGVNHRMRKIDELAEKLEE.

It belongs to the WhiA family.

In terms of biological role, involved in cell division and chromosome segregation. This Desulfitobacterium hafniense (strain Y51) protein is Probable cell division protein WhiA.